The sequence spans 267 residues: Glutamate racemase (267 aa).

Substrate is bound by residues 9 to 10 (DS) and 41 to 42 (YS). The active-site Proton donor/acceptor is Cys73. 74–75 (NT) is a substrate binding site. Residue Cys184 is the Proton donor/acceptor of the active site. 185-186 (TH) contributes to the substrate binding site.

It belongs to the aspartate/glutamate racemases family.

The enzyme catalyses L-glutamate = D-glutamate. Its pathway is cell wall biogenesis; peptidoglycan biosynthesis. Functionally, provides the (R)-glutamate required for cell wall biosynthesis. The chain is Glutamate racemase from Actinobacillus pleuropneumoniae serotype 7 (strain AP76).